Here is a 394-residue protein sequence, read N- to C-terminus: Elongation factor Tu (394 aa).

The tr-type G domain maps to 10–204 (KPHVNVGTIG…AVDEWIPTPT (195 aa)). The interval 19-26 (GHIDHGKT) is G1. Position 19-26 (19-26 (GHIDHGKT)) interacts with GTP. Thr-26 contributes to the Mg(2+) binding site. The segment at 60–64 (GITIN) is G2. Residues 81 to 84 (DCPG) form a G3 region. Residues 81-85 (DCPGH) and 136-139 (NKCD) contribute to the GTP site. The G4 stretch occupies residues 136–139 (NKCD). The G5 stretch occupies residues 174-176 (SAL).

Belongs to the TRAFAC class translation factor GTPase superfamily. Classic translation factor GTPase family. EF-Tu/EF-1A subfamily. In terms of assembly, monomer.

The protein localises to the cytoplasm. It carries out the reaction GTP + H2O = GDP + phosphate + H(+). GTP hydrolase that promotes the GTP-dependent binding of aminoacyl-tRNA to the A-site of ribosomes during protein biosynthesis. In Mycoplasma genitalium (strain ATCC 33530 / DSM 19775 / NCTC 10195 / G37) (Mycoplasmoides genitalium), this protein is Elongation factor Tu.